Consider the following 359-residue polypeptide: Membrane-bound lytic murein transglycosylase C (359 aa).

The N-terminal stretch at 1 to 16 (MKKYLALALIAPLLIS) is a signal peptide. A lipid anchor (N-palmitoyl cysteine) is attached at cysteine 17. The S-diacylglycerol cysteine moiety is linked to residue cysteine 17.

The protein belongs to the transglycosylase Slt family.

It is found in the cell outer membrane. The catalysed reaction is Exolytic cleavage of the (1-&gt;4)-beta-glycosidic linkage between N-acetylmuramic acid (MurNAc) and N-acetylglucosamine (GlcNAc) residues in peptidoglycan, from either the reducing or the non-reducing ends of the peptidoglycan chains, with concomitant formation of a 1,6-anhydrobond in the MurNAc residue.. Functionally, murein-degrading enzyme. May play a role in recycling of muropeptides during cell elongation and/or cell division. The chain is Membrane-bound lytic murein transglycosylase C from Shigella flexneri serotype 5b (strain 8401).